We begin with the raw amino-acid sequence, 148 residues long: UPF0756 membrane protein YeaL (148 aa).

4 helical membrane-spanning segments follow: residues Ala14 to Val34, Leu51 to Leu71, Phe80 to Gly100, and Val121 to Val141.

This sequence belongs to the UPF0756 family.

The protein localises to the cell membrane. This is UPF0756 membrane protein YeaL from Escherichia fergusonii (strain ATCC 35469 / DSM 13698 / CCUG 18766 / IAM 14443 / JCM 21226 / LMG 7866 / NBRC 102419 / NCTC 12128 / CDC 0568-73).